The primary structure comprises 62 residues: Short neurotoxin C (62 aa).

Residues 1–16 (RRCFNQQSSQPQTNKS) are compositionally biased toward polar residues. The tract at residues 1–22 (RRCFNQQSSQPQTNKSCPPGEN) is disordered. Intrachain disulfides connect C3–C24, C17–C41, C43–C54, and C55–C60.

The protein belongs to the three-finger toxin family. Short-chain subfamily. Type I alpha-neurotoxin sub-subfamily. In terms of tissue distribution, expressed by the venom gland.

It is found in the secreted. In terms of biological role, binds to muscle nicotinic acetylcholine receptor (nAChR) and inhibit acetylcholine from binding to the receptor, thereby impairing neuromuscular transmission. The sequence is that of Short neurotoxin C from Laticauda laticaudata (Blue-ringed sea krait).